We begin with the raw amino-acid sequence, 156 residues long: C-type lectin lectoxin-Lei1 (156 aa).

Positions 1 to 23 (MRRFLFLSLGVLVVAFSLNGIGA) are cleaved as a signal peptide. Intrachain disulfides connect Cys27–Cys38, Cys55–Cys154, and Cys129–Cys146. The C-type lectin domain occupies 34–155 (FDRFCYKVIK…CESRNIFICK (122 aa)). N-linked (GlcNAc...) asparagine glycans are attached at residues Asn60 and Asn99. The short motif at 119–121 (KRN) is the Sugar-binding element. Asn142 serves as a coordination point for Ca(2+).

Belongs to the true venom lectin family. Expressed by the venom gland.

It is found in the secreted. In terms of biological role, lectin which recognizes specific carbohydrate structures and agglutinates a variety of animal cells by binding to cell-surface glycoproteins and glycolipids. May be a calcium-dependent lectin. The polypeptide is C-type lectin lectoxin-Lei1 (Leioheterodon madagascariensis (Malagasy giant hognose snake)).